The primary structure comprises 402 residues: MALQAATTTSFLPSALSARKEGAVKDSAFLGVRLGDGLKLETSALGLRTKRVSTSSVAIRAQASAAVSSPTVTPASPSGKQTLRKGTAVITGASSGLGLATAKALAETGRWHVVMGCRDFLKASRAAKAAGMEKGSYTIVHLDLASLDSVRQFVANVRRLEMPVDVVVCNAAVYQPTAKQPSFTADGFEMSVGVNHLGHFLLARELLADLTSSDYPSKRLIIVGSITGNTNTLAGNVPPKANLGDLRGLASGLDGVSSSAMIDGGEFDGAKAYKDSKVCNMLTMQEFHRRYHGETGVTFASLYPGCIATTGLFREHVPLFRLLFPPFQKYITKGYVSEEEAGKRLAQVVSDPSLTKSGVYWSWNNNSASFENQLSEEASDPEKAKKVWELSEKLVGLADHDQ.

This sequence belongs to the short-chain dehydrogenases/reductases (SDR) family. POR subfamily.

The protein resides in the plastid. Its subcellular location is the chloroplast. The enzyme catalyses chlorophyllide a + NADP(+) = protochlorophyllide a + NADPH + H(+). It functions in the pathway porphyrin-containing compound metabolism; chlorophyll biosynthesis. Its function is as follows. Phototransformation of protochlorophyllide (Pchlide) to chlorophyllide (Chlide). The protein is Protochlorophyllide reductase B, chloroplastic (PORB) of Oryza sativa subsp. japonica (Rice).